A 220-amino-acid chain; its full sequence is Guanylate kinase (220 aa).

A Guanylate kinase-like domain is found at 16 to 195; that stretch reads GLMFVLSSPS…AFESVKAILR (180 aa). 23–30 lines the ATP pocket; sequence SPSGAGKT.

The protein belongs to the guanylate kinase family.

The protein localises to the cytoplasm. The enzyme catalyses GMP + ATP = GDP + ADP. Its function is as follows. Essential for recycling GMP and indirectly, cGMP. The protein is Guanylate kinase of Rhodopseudomonas palustris (strain HaA2).